We begin with the raw amino-acid sequence, 318 residues long: Transaldolase (318 aa).

Catalysis depends on Lys132, which acts as the Schiff-base intermediate with substrate.

This sequence belongs to the transaldolase family. Type 1 subfamily. Homodimer.

The protein localises to the cytoplasm. The catalysed reaction is D-sedoheptulose 7-phosphate + D-glyceraldehyde 3-phosphate = D-erythrose 4-phosphate + beta-D-fructose 6-phosphate. The protein operates within carbohydrate degradation; pentose phosphate pathway; D-glyceraldehyde 3-phosphate and beta-D-fructose 6-phosphate from D-ribose 5-phosphate and D-xylulose 5-phosphate (non-oxidative stage): step 2/3. Transaldolase is important for the balance of metabolites in the pentose-phosphate pathway. The protein is Transaldolase of Shewanella baltica (strain OS223).